A 341-amino-acid polypeptide reads, in one-letter code: MTEMFYDDDADLSIIQGRKVAIVGYGSQGHAHALNLRDSGVEVTIALKEGSSSIAKAQDAGFTVKNVADAAEWADVIMILAPDQHQRSIYNDSIKDKLTPGKALAFAHGFNIRFGYIKAPEGVDVILIAPKAPGHTVRREFEAGRGIPDIIAVEQDATGAAWDLAKSYAKAIGGTRAGVIKTTFTEETETDLFGEQAVLCGGVSQLVQYGFETLTEAGYQPQIAYFEVLHELKLIVDLMWEGGIAKQRWSVSDTAEYGDYVSGPRVITPEVKENMKAVLADIQNGAFAKRFIEDQDNGGVEFKALRAKAEQHPIESVGRELRGLFSWQQQDEDYVEGSAAR.

One can recognise a KARI N-terminal Rossmann domain in the interval 1–182; sequence MTEMFYDDDA…GGTRAGVIKT (182 aa). NADP(+) contacts are provided by residues 25–28, Lys-48, Ser-51, Ser-53, and 83–86; these read YGSQ and DQHQ. His-108 is an active-site residue. Gly-134 serves as a coordination point for NADP(+). The region spanning 183–328 is the KARI C-terminal knotted domain; that stretch reads TFTEETETDL…RELRGLFSWQ (146 aa). Positions 191, 195, 227, and 231 each coordinate Mg(2+). Ser-252 serves as a coordination point for substrate.

It belongs to the ketol-acid reductoisomerase family. Mg(2+) serves as cofactor.

The enzyme catalyses (2R)-2,3-dihydroxy-3-methylbutanoate + NADP(+) = (2S)-2-acetolactate + NADPH + H(+). It catalyses the reaction (2R,3R)-2,3-dihydroxy-3-methylpentanoate + NADP(+) = (S)-2-ethyl-2-hydroxy-3-oxobutanoate + NADPH + H(+). It participates in amino-acid biosynthesis; L-isoleucine biosynthesis; L-isoleucine from 2-oxobutanoate: step 2/4. Its pathway is amino-acid biosynthesis; L-valine biosynthesis; L-valine from pyruvate: step 2/4. Involved in the biosynthesis of branched-chain amino acids (BCAA). Catalyzes an alkyl-migration followed by a ketol-acid reduction of (S)-2-acetolactate (S2AL) to yield (R)-2,3-dihydroxy-isovalerate. In the isomerase reaction, S2AL is rearranged via a Mg-dependent methyl migration to produce 3-hydroxy-3-methyl-2-ketobutyrate (HMKB). In the reductase reaction, this 2-ketoacid undergoes a metal-dependent reduction by NADPH to yield (R)-2,3-dihydroxy-isovalerate. The chain is Ketol-acid reductoisomerase (NADP(+)) from Arthrobacter sp. (strain FB24).